The sequence spans 168 residues: Putative insulin-like growth factor 2 antisense gene protein (168 aa).

2 disordered regions span residues 1–91 (MSKR…ERSN) and 108–168 (PLRR…RPGK). Composition is skewed to basic residues over residues 59–70 (AQRRRGSARRGA) and 159–168 (RWRQPGRPGK).

The chain is Putative insulin-like growth factor 2 antisense gene protein (IGF2-AS) from Homo sapiens (Human).